A 553-amino-acid polypeptide reads, in one-letter code: Fusion glycoprotein F0 (553 aa).

An N-terminal signal peptide occupies residues 1 to 31; the sequence is MGSRSSTRIPVPLMLTVRIMLALSCVCPTSS. Over 32 to 500 the chain is Extracellular; sequence LDGRPLAAAG…VNVKLTSTSA (469 aa). Cystine bridges form between cysteine 76–cysteine 199, cysteine 338–cysteine 347, cysteine 362–cysteine 370, cysteine 394–cysteine 399, and cysteine 401–cysteine 424. Asparagine 85 carries an N-linked (GlcNAc...) asparagine; by host glycan. Positions 117 to 141 are fusion peptide; sequence LIGAIIGGVALGVATAAQITAASAL. Residues 142-170 adopt a coiled-coil conformation; that stretch reads IQANQNAANILRLKESIAATNEAVHEVTD. An N-linked (GlcNAc...) asparagine; by host glycan is attached at asparagine 191. The N-linked (GlcNAc...) asparagine; by host glycan is linked to asparagine 366. Residues asparagine 447 and asparagine 471 are each glycosylated (N-linked (GlcNAc...) asparagine; by host). Residues 466–491 are a coiled coil; the sequence is ELGNVNNSISNALDKLEESNSKLDKV. The helical transmembrane segment at 501–521 threads the bilayer; that stretch reads LITYIFLTVISLVCGILSLVL. At 522-553 the chain is on the cytoplasmic side; that stretch reads ACYLMYKQKAQQKTLLWLGNNTLDQMRATTKM. Cysteine 523 carries the S-palmitoyl cysteine; by host lipid modification.

Belongs to the paramyxoviruses fusion glycoprotein family. As to quaternary structure, homotrimer of disulfide-linked F1-F2. Post-translationally, the inactive precursor F0 is glycosylated and proteolytically cleaved into F1 and F2 to be functionally active. The cleavage is mediated by cellular proteases during the transport and maturation of the polypeptide.

It localises to the virion membrane. It is found in the host cell membrane. Its function is as follows. Class I viral fusion protein. Under the current model, the protein has at least 3 conformational states: pre-fusion native state, pre-hairpin intermediate state, and post-fusion hairpin state. During viral and plasma cell membrane fusion, the heptad repeat (HR) regions assume a trimer-of-hairpins structure, positioning the fusion peptide in close proximity to the C-terminal region of the ectodomain. The formation of this structure appears to drive apposition and subsequent fusion of viral and plasma cell membranes. Directs fusion of viral and cellular membranes leading to delivery of the nucleocapsid into the cytoplasm. This fusion is pH independent and occurs directly at the outer cell membrane. The trimer of F1-F2 (F protein) probably interacts with HN at the virion surface. Upon HN binding to its cellular receptor, the hydrophobic fusion peptide is unmasked and interacts with the cellular membrane, inducing the fusion between cell and virion membranes. Later in infection, F proteins expressed at the plasma membrane of infected cells could mediate fusion with adjacent cells to form syncytia, a cytopathic effect that could lead to tissue necrosis. The sequence is that of Fusion glycoprotein F0 (F) from Newcastle disease virus (strain D26/76) (NDV).